The chain runs to 163 residues: Nucleotide-binding protein YajQ (163 aa).

It belongs to the YajQ family.

In terms of biological role, nucleotide-binding protein. The polypeptide is Nucleotide-binding protein YajQ (Escherichia coli (strain K12 / DH10B)).